We begin with the raw amino-acid sequence, 992 residues long: Aminopeptidase Q (992 aa).

Topologically, residues 2–13 are cytoplasmic; sequence GPPSSSGFYVSR. The helical; Signal-anchor for type II membrane protein transmembrane segment at 14-34 threads the bilayer; it reads AVALLLAALAAALLLALAVLA. The Extracellular segment spans residues 35-992; that stretch reads ALYGRCARVQ…RMTAWLRKNT (958 aa). A disordered region spans residues 48–92; that stretch reads LHHGGVPDAASSPRGTQEEQLPTWPPRPTREPAGTATPGHWRPPG. Asn-133 carries N-linked (GlcNAc...) asparagine glycosylation. Glu-241 is a binding site for substrate. Asn-262, Asn-289, Asn-347, and Asn-361 each carry an N-linked (GlcNAc...) asparagine glycan. A substrate-binding site is contributed by 380–384; that stretch reads SAMEN. Residue His-416 participates in Zn(2+) binding. Glu-417 (proton acceptor) is an active-site residue. Zn(2+)-binding residues include His-420 and Glu-439. A glycan (N-linked (GlcNAc...) asparagine) is linked at Asn-489. Catalysis depends on Tyr-505, which acts as the Proton donor. Asn-584, Asn-602, Asn-609, Asn-655, Asn-811, Asn-850, and Asn-889 each carry an N-linked (GlcNAc...) asparagine glycan.

This sequence belongs to the peptidase M1 family. It depends on Zn(2+) as a cofactor. As to expression, expressed in skin. Expression levels do not differ between dark and light skin areas.

It is found in the membrane. Metalloprotease which may be important for placentation by regulating biological activity of key peptides at the embryo-maternal interface. Involved in coat pigmentation patterns. During skin development, may be required to establish the periodicity of tabby markings, initiating a pre-pattern at or before hair follicle development. This chain is Aminopeptidase Q (LVRN), found in Acinonyx jubatus (Cheetah).